We begin with the raw amino-acid sequence, 550 residues long: Carnitine transporter (550 aa).

A run of 12 helical transmembrane segments spans residues 15 to 35, 53 to 73, 92 to 112, 137 to 157, 196 to 216, 230 to 250, 263 to 283, 317 to 337, 347 to 367, 401 to 421, 451 to 471, and 477 to 497; these read FLAVTSLLFVFISVAGLAIYS, FTTPVLLFAFLAIIFTFGLAF, SWIFMFILSGIGSSTLYWGFL, VAYSFFHSGLSAWAIYALASI, MFLLCMFGALTISLVLTAVTF, FMTKVIIILAVSVLFALSSYV, VCLGVVLFAIYVLCFGPTQFI, WTVFYWLWWISYAPGVALFVT, EVIFAMVIGGSVGLWFIFGVF, LLPAGKLMMWIFLGIMVVFLA, LFWCVMLTLVPIAMIFSKAPL, and ATIVTALPFIVIILIQTYGLV.

This sequence belongs to the BCCT transporter (TC 2.A.15) family.

It localises to the cell inner membrane. Its activity is regulated as follows. Inhibited by the protonophore 3,3',4',5-tetrachlorosalicylanilide (TCS). Not activated by osmolarity. Its function is as follows. Catalyzes the energy-dependent uptake of carnitine and is essential for growth on carnitine. Can also mediate the uptake of choline. Is probably a proton:substrate symporter. This is Carnitine transporter from Acinetobacter baumannii (strain ATCC 19606 / DSM 30007 / JCM 6841 / CCUG 19606 / CIP 70.34 / NBRC 109757 / NCIMB 12457 / NCTC 12156 / 81).